A 199-amino-acid chain; its full sequence is Recombination protein RecR (199 aa).

The C4-type zinc finger occupies 57–72 (CPICGNITEKEVCDIC). A Toprim domain is found at 80-176 (TTIMVVEQPK…KVTRLAAGLS (97 aa)).

The protein belongs to the RecR family.

In terms of biological role, may play a role in DNA repair. It seems to be involved in an RecBC-independent recombinational process of DNA repair. It may act with RecF and RecO. The polypeptide is Recombination protein RecR (Lactobacillus helveticus (strain DPC 4571)).